Here is a 488-residue protein sequence, read N- to C-terminus: 3-octaprenyl-4-hydroxybenzoate carboxy-lyase (488 aa).

Mn(2+) is bound at residue Asn-172. Residues Ile-175–Arg-177, Arg-189–Leu-191, and Arg-194–Gly-195 contribute to the prenylated FMN site. Position 238 (Glu-238) interacts with Mn(2+). Asp-287 functions as the Proton donor in the catalytic mechanism.

It belongs to the UbiD family. Homohexamer. It depends on prenylated FMN as a cofactor. Mn(2+) serves as cofactor.

The protein localises to the cell membrane. The catalysed reaction is a 4-hydroxy-3-(all-trans-polyprenyl)benzoate + H(+) = a 2-(all-trans-polyprenyl)phenol + CO2. It participates in cofactor biosynthesis; ubiquinone biosynthesis. Its function is as follows. Catalyzes the decarboxylation of 3-octaprenyl-4-hydroxy benzoate to 2-octaprenylphenol, an intermediate step in ubiquinone biosynthesis. The chain is 3-octaprenyl-4-hydroxybenzoate carboxy-lyase from Stutzerimonas stutzeri (strain A1501) (Pseudomonas stutzeri).